Reading from the N-terminus, the 358-residue chain is Peptide chain release factor 1 (358 aa).

Glutamine 233 carries the post-translational modification N5-methylglutamine.

Belongs to the prokaryotic/mitochondrial release factor family. Post-translationally, methylated by PrmC. Methylation increases the termination efficiency of RF1.

It is found in the cytoplasm. Functionally, peptide chain release factor 1 directs the termination of translation in response to the peptide chain termination codons UAG and UAA. The sequence is that of Peptide chain release factor 1 from Staphylococcus aureus (strain MSSA476).